We begin with the raw amino-acid sequence, 692 residues long: MNRILSKGPRGLNGLLRACPSNFGRSFLCRSTYNVNSRTFWSAPRLRSEDSPSSSQPLKPDPNDGNGNTHRTTSTASSQHTPWYLQEETPIDESRQISSRDQIPELPENSPAILPVLLDYVFKDLGLDELRLLDLRGLETPPPIGANAIMIIGTARSVKHLNVSADRLCRWLRSTYKLTPYADGLLGRNELKIKLRRKARRARVASRAGTTVDEKDDGITTGWICVNAGVVENSPVGEQASRKVEGFGNIVGGTRVVVQMFTEEKRAEVDLEGLWLATIERDRRRRQVSIDTKSDAPHEEVRASTPVQNSSSDHVFGLHSRSSAILPLEQRRGLHSKCRLLGPQTEDNQDDGLDDGLDMSPDSNSTGTDHLAANRTCDKEVATDSLLEHLSGLPDDEALSELGAGQEDTDSTPFLRRFYDALSQMSAEEAAVAQVKLLCTAISRHHLGYSKESLWKAFTTCNYHTYFISDELGIEIVSAMLTALPARQGGPKATGVLPEADRELALRVLEHLSLRGTDILNMKVFHLLYKAASHPTNLSGEEVVKDVTGTTKDRPTSRVAKLIETLDIQFDPEEARKLMMSMFRNEDYDGFWKLWSKLPLNGSPRTSADYEMLFRLHAELGDERRARDCVSTWAPIMSREHPPIPLRGQVVQHIMYCILIAEPAIDRMATAGSTSNLALIWNDCKNNAPARG.

The N-terminal 73 residues, methionine 1–threonine 73, are a transit peptide targeting the mitochondrion. 3 disordered regions span residues proline 44–tryptophan 83, arginine 286–histidine 314, and cysteine 338–alanine 373. Positions glycine 65 to threonine 81 are enriched in polar residues. Over residues threonine 292 to arginine 302 the composition is skewed to basic and acidic residues. Acidic residues predominate over residues aspartate 347 to leucine 357.

This sequence belongs to the ATP25 family.

It localises to the mitochondrion inner membrane. Its function is as follows. Probable mitochondrial mRNA stabilization factor. This is ATPase synthesis protein 25, mitochondrial (atp25) from Neosartorya fischeri (strain ATCC 1020 / DSM 3700 / CBS 544.65 / FGSC A1164 / JCM 1740 / NRRL 181 / WB 181) (Aspergillus fischerianus).